Here is a 250-residue protein sequence, read N- to C-terminus: Flavin-dependent thymidylate synthase (250 aa).

The ThyX domain occupies 7-233 (LRVQLIAKTD…PAVFADFEVT (227 aa)). FAD-binding positions include Ser-71, 95 to 97 (RHR), and Gln-103. DUMP contacts are provided by residues 92–95 (ELIR), 103–107 (QLSQR), and Arg-172. The short motif at 95–105 (RHRHFSYSQLS) is the ThyX motif element. FAD is bound by residues 188-190 (NYR) and His-194. Arg-199 lines the dUMP pocket. The active-site Involved in ionization of N3 of dUMP, leading to its activation is the Arg-199.

It belongs to the thymidylate synthase ThyX family. As to quaternary structure, homotetramer. It depends on FAD as a cofactor.

The enzyme catalyses dUMP + (6R)-5,10-methylene-5,6,7,8-tetrahydrofolate + NADPH + H(+) = dTMP + (6S)-5,6,7,8-tetrahydrofolate + NADP(+). The protein operates within pyrimidine metabolism; dTTP biosynthesis. Its function is as follows. Catalyzes the reductive methylation of 2'-deoxyuridine-5'-monophosphate (dUMP) to 2'-deoxythymidine-5'-monophosphate (dTMP) while utilizing 5,10-methylenetetrahydrofolate (mTHF) as the methyl donor, and NADPH and FADH(2) as the reductant. The chain is Flavin-dependent thymidylate synthase from Mycobacterium bovis (strain ATCC BAA-935 / AF2122/97).